The primary structure comprises 57 residues: Granulin-3 (57 aa).

Cystine bridges form between cysteine 4–cysteine 16 and cysteine 10–cysteine 26.

The protein belongs to the granulin family. Post-translationally, granulins are disulfide bridged. Ubiquitous.

The protein localises to the secreted. Functionally, granulins have possible cytokine-like activity. They may play a role in inflammation, wound repair, and tissue remodeling. This is Granulin-3 from Cyprinus carpio (Common carp).